The primary structure comprises 252 residues: Acetoacetate decarboxylase (252 aa).

Residue Lys116 is the Schiff-base intermediate with acetoacetate of the active site.

This sequence belongs to the ADC family.

It carries out the reaction acetoacetate + H(+) = acetone + CO2. Functionally, catalyzes the conversion of acetoacetate to acetone and carbon dioxide. The chain is Acetoacetate decarboxylase from Paraburkholderia phytofirmans (strain DSM 17436 / LMG 22146 / PsJN) (Burkholderia phytofirmans).